The sequence spans 830 residues: Periplasmic nitrate reductase (830 aa).

The tat-type signal signal peptide spans 1–31 (MKLSRRDFMKANAAVAAAAAAGMTIPTVAKA). The 4Fe-4S Mo/W bis-MGD-type domain maps to 39–95 (IKWDKAPCRFCGTGCGVLVGTQNGRIVASQGDPDSPVNRGLNCIKGYFLPKIMYGKD). The [4Fe-4S] cluster site is built by Cys-46, Cys-49, Cys-53, and Cys-81. Residues Lys-83, Gln-150, Asn-175, Cys-179, 212–219 (WGSNMAEM), 243–247 (STYEH), 262–264 (QTD), Met-372, Gln-376, Asn-482, 508–509 (SD), Lys-531, Asp-558, and 718–727 (TGRVLEHWHT) contribute to the Mo-bis(molybdopterin guanine dinucleotide) site. Phe-794 contacts substrate. Mo-bis(molybdopterin guanine dinucleotide) is bound by residues Asn-802 and Lys-819.

This sequence belongs to the prokaryotic molybdopterin-containing oxidoreductase family. NasA/NapA/NarB subfamily. As to quaternary structure, component of the periplasmic nitrate reductase NapAB complex composed of NapA and NapB. The cofactor is [4Fe-4S] cluster. Mo-bis(molybdopterin guanine dinucleotide) serves as cofactor. Predicted to be exported by the Tat system. The position of the signal peptide cleavage has not been experimentally proven.

Its subcellular location is the periplasm. It carries out the reaction 2 Fe(II)-[cytochrome] + nitrate + 2 H(+) = 2 Fe(III)-[cytochrome] + nitrite + H2O. Its function is as follows. Catalytic subunit of the periplasmic nitrate reductase complex NapAB. Receives electrons from NapB and catalyzes the reduction of nitrate to nitrite. In Yersinia pseudotuberculosis serotype IB (strain PB1/+), this protein is Periplasmic nitrate reductase.